A 65-amino-acid chain; its full sequence is Beta-toxin Am IT (65 aa).

Pyrrolidone carboxylic acid (Glu); partial is present on Glu-1. Positions 1 to 64 (EHGYLLDKYT…LWNYKTNKCK (64 aa)) constitute an LCN-type CS-alpha/beta domain. 4 cysteine pairs are disulfide-bonded: Cys-12/Cys-63, Cys-16/Cys-38, Cys-23/Cys-45, and Cys-27/Cys-47. Position 65 is a serine amide (Ser-65).

The protein belongs to the long (4 C-C) scorpion toxin superfamily. Sodium channel inhibitor family. As to expression, expressed by the venom gland.

It is found in the secreted. Its function is as follows. Has a toxic effect on insects and mammals. On German cockroach larvae, it provokes contraction, paralysis and lethality. Intracerebroventricular injection into mice causes severe neurotoxic symptoms. It fully competes with the binding of the iodinated Css4 (AC P60266) on rat brain synaptosomes, with moderate affinity and in a concentration-dependent manner (EC(50)=25 nM). It may act on both site 3 and site 4 of voltage-gated sodium channels. The sequence is that of Beta-toxin Am IT from Androctonus mauritanicus mauritanicus (Scorpion).